A 332-amino-acid polypeptide reads, in one-letter code: Ferredoxin--NADP reductase (332 aa).

FAD is bound by residues T20, E39, Q47, Y52, V92, F126, D288, and S329.

The protein belongs to the ferredoxin--NADP reductase type 2 family. Homodimer. Requires FAD as cofactor.

The enzyme catalyses 2 reduced [2Fe-2S]-[ferredoxin] + NADP(+) + H(+) = 2 oxidized [2Fe-2S]-[ferredoxin] + NADPH. This Geobacillus thermodenitrificans (strain NG80-2) protein is Ferredoxin--NADP reductase.